The sequence spans 308 residues: MLSAAEGILLCVVTSEAVLGVLGDTFIALANCMEYAKNKKLSKIGFILIGLAISRIGVVWIIILQGYMQVFFPHILTFGNITEYITYIWVFLNHLSVWFATNLNILYFLKIANFSNSVFLWLKSRVRVVFIFLSGCLLTSWLLCFPQFSKMLNNSKMYWGNTSWLQQQKNVFLINQSLTNLGIFFFIIVSLITCFLLIVFLWRHIRQMHSDGSGLRDLNTEAHVKAMRVLISFAVLFILHFVGLSIQVLCFFLPQNNLLFITGLIATCLYPCGHSIILILGNKQLKQASLKALQHLTCCETKRNLSVT.

Residues 1 to 7 lie on the Extracellular side of the membrane; sequence MLSAAEG. The helical transmembrane segment at 8 to 28 threads the bilayer; the sequence is ILLCVVTSEAVLGVLGDTFIA. Residues 29–43 lie on the Cytoplasmic side of the membrane; the sequence is LANCMEYAKNKKLSK. The helical transmembrane segment at 44 to 64 threads the bilayer; the sequence is IGFILIGLAISRIGVVWIIIL. Over 65–94 the chain is Extracellular; it reads QGYMQVFFPHILTFGNITEYITYIWVFLNH. A glycan (N-linked (GlcNAc...) asparagine) is linked at N80. A helical transmembrane segment spans residues 95-115; the sequence is LSVWFATNLNILYFLKIANFS. Residues 116 to 127 are Cytoplasmic-facing; it reads NSVFLWLKSRVR. Residues 128–148 form a helical membrane-spanning segment; sequence VVFIFLSGCLLTSWLLCFPQF. Residues 149–180 are Extracellular-facing; it reads SKMLNNSKMYWGNTSWLQQQKNVFLINQSLTN. N-linked (GlcNAc...) asparagine glycans are attached at residues N153, N161, and N175. A helical transmembrane segment spans residues 181 to 201; the sequence is LGIFFFIIVSLITCFLLIVFL. Topologically, residues 202–232 are cytoplasmic; it reads WRHIRQMHSDGSGLRDLNTEAHVKAMRVLIS. The chain crosses the membrane as a helical span at residues 233–253; sequence FAVLFILHFVGLSIQVLCFFL. Topologically, residues 254 to 258 are extracellular; the sequence is PQNNL. A helical membrane pass occupies residues 259–279; sequence LFITGLIATCLYPCGHSIILI. Over 280 to 308 the chain is Cytoplasmic; sequence LGNKQLKQASLKALQHLTCCETKRNLSVT.

It belongs to the G-protein coupled receptor T2R family.

The protein localises to the membrane. Putative taste receptor which may play a role in the perception of bitterness. The protein is Taste receptor type 2 member 107 of Rattus norvegicus (Rat).